The sequence spans 253 residues: Probable transcriptional regulatory protein Hore_12350 (253 aa).

A disordered region spans residues 1–21 (MAGHSKWANIKHKKAKEDRKR).

The protein belongs to the TACO1 family.

The protein resides in the cytoplasm. This Halothermothrix orenii (strain H 168 / OCM 544 / DSM 9562) protein is Probable transcriptional regulatory protein Hore_12350.